A 335-amino-acid polypeptide reads, in one-letter code: Ferrochelatase (335 aa).

Fe cation is bound by residues histidine 207 and glutamate 288.

The protein belongs to the ferrochelatase family.

It localises to the cytoplasm. It catalyses the reaction heme b + 2 H(+) = protoporphyrin IX + Fe(2+). It participates in porphyrin-containing compound metabolism; protoheme biosynthesis; protoheme from protoporphyrin-IX: step 1/1. Its function is as follows. Catalyzes the ferrous insertion into protoporphyrin IX. The protein is Ferrochelatase of Helicobacter pylori (strain J99 / ATCC 700824) (Campylobacter pylori J99).